Here is a 641-residue protein sequence, read N- to C-terminus: Epsin-2 (641 aa).

Positions 8, 11, 25, 30, 63, and 73 each coordinate a 1,2-diacyl-sn-glycero-3-phospho-(1D-myo-inositol-4,5-bisphosphate). The region spanning 12-144 (NIVNNYSEAE…KDEERLKAER (133 aa)) is the ENTH domain. Residues R153 and Q156 each carry the phosphoserine modification. Over residues 163–181 (SNQITFGRGSSQPNLSTSH) the composition is skewed to polar residues. Disordered stretches follow at residues 163–214 (SNQI…GAPL) and 255–275 (RATS…TSGE). R170 carries the post-translational modification Omega-N-methylarginine. Phosphoserine is present on residues S173, S192, and S195. Over residues 259–273 (PRVSSELEQARPQTS) the composition is skewed to polar residues. UIM domains follow at residues 275 to 294 (EEEL…AEQE) and 300 to 319 (GDDL…TVKI). The segment at 340-425 (ALPSSGPAAQ…QPASSAGKRA (86 aa)) is disordered. 6 consecutive repeat copies span residues 352 to 354 (EPW), 364 to 366 (NPW), 377 to 379 (DPW), 391 to 393 (DPW), 409 to 411 (DPW), and 427 to 429 (DAW). The segment at 352–639 (EPWGPSASTN…AQATGTTNPF (288 aa)) is 6 X 3 AA repeats of [DE]-P-W. Residues 408 to 421 (SDPWAASQQPASSA) are compositionally biased toward low complexity. Residues 470–512 (TAESVTSLPSQNNGTTSPDPFESQPLTVASSKPSSARKTPESF) form a disordered region. A compositionally biased stretch (polar residues) spans 472–506 (ESVTSLPSQNNGTTSPDPFESQPLTVASSKPSSAR). S486 carries the post-translational modification Phosphoserine. Residue T508 is modified to Phosphothreonine. 2 consecutive repeat copies span residues 537 to 539 (NPF) and 552 to 554 (NPF). Residues 537 to 639 (NPFLAPGAPA…AQATGTTNPF (103 aa)) form a 3 X 3 AA repeats of N-P-F region. Residue S570 is modified to Phosphoserine. The stretch at 637–639 (NPF) is repeat 3.

It belongs to the epsin family. In terms of assembly, binds EPS15. Interacts with ITSN1. Binds AP-2 and clathrin. Interacts with UBQLN2. In terms of processing, ubiquitinated. Highest expression is found in brain. Detected at lower levels in lung and liver.

The protein localises to the cytoplasm. Its subcellular location is the cytoplasmic vesicle. The protein resides in the clathrin-coated vesicle. Its function is as follows. Plays a role in the formation of clathrin-coated invaginations and endocytosis. The chain is Epsin-2 (EPN2) from Homo sapiens (Human).